We begin with the raw amino-acid sequence, 229 residues long: 2,3-bisphosphoglycerate-dependent phosphoglycerate mutase 2 (229 aa).

Substrate-binding positions include 8–15 (RHGQSEWN), 21–22 (TG), Arg-60, 87–90 (ERHY), Lys-98, 114–115 (RR), and 183–184 (GN). His-9 serves as the catalytic Tele-phosphohistidine intermediate. Glu-87 serves as the catalytic Proton donor/acceptor.

The protein belongs to the phosphoglycerate mutase family. BPG-dependent PGAM subfamily.

The catalysed reaction is (2R)-2-phosphoglycerate = (2R)-3-phosphoglycerate. The protein operates within carbohydrate degradation; glycolysis; pyruvate from D-glyceraldehyde 3-phosphate: step 3/5. Its function is as follows. Catalyzes the interconversion of 2-phosphoglycerate and 3-phosphoglycerate. In Latilactobacillus sakei subsp. sakei (strain 23K) (Lactobacillus sakei subsp. sakei), this protein is 2,3-bisphosphoglycerate-dependent phosphoglycerate mutase 2.